The sequence spans 209 residues: Octanoyltransferase (209 aa).

The BPL/LPL catalytic domain occupies 30–209 (DHEPEIIYLV…IQTEFNKIFK (180 aa)). Residues 69–76 (RGGKFTFH), 143–145 (AIG), and 156–158 (GVA) contribute to the substrate site. C174 functions as the Acyl-thioester intermediate in the catalytic mechanism.

The protein belongs to the LipB family.

The protein resides in the cytoplasm. The catalysed reaction is octanoyl-[ACP] + L-lysyl-[protein] = N(6)-octanoyl-L-lysyl-[protein] + holo-[ACP] + H(+). It participates in protein modification; protein lipoylation via endogenous pathway; protein N(6)-(lipoyl)lysine from octanoyl-[acyl-carrier-protein]: step 1/2. Its function is as follows. Catalyzes the transfer of endogenously produced octanoic acid from octanoyl-acyl-carrier-protein onto the lipoyl domains of lipoate-dependent enzymes. Lipoyl-ACP can also act as a substrate although octanoyl-ACP is likely to be the physiological substrate. The sequence is that of Octanoyltransferase from Rickettsia rickettsii (strain Iowa).